The primary structure comprises 396 residues: Elongation factor Tu (396 aa).

Positions 10-206 (KPHVNVGTIG…ALDTYIPTPE (197 aa)) constitute a tr-type G domain. Residues 19–26 (GHVDHGKT) form a G1 region. 19-26 (GHVDHGKT) lines the GTP pocket. Position 26 (threonine 26) interacts with Mg(2+). The tract at residues 60–64 (GITIN) is G2. The tract at residues 81–84 (DCPG) is G3. GTP contacts are provided by residues 81–85 (DCPGH) and 136–139 (NKAD). Positions 136–139 (NKAD) are G4. The tract at residues 174–176 (SAK) is G5.

This sequence belongs to the TRAFAC class translation factor GTPase superfamily. Classic translation factor GTPase family. EF-Tu/EF-1A subfamily. Monomer.

The protein resides in the cytoplasm. It carries out the reaction GTP + H2O = GDP + phosphate + H(+). Its function is as follows. GTP hydrolase that promotes the GTP-dependent binding of aminoacyl-tRNA to the A-site of ribosomes during protein biosynthesis. This chain is Elongation factor Tu, found in Bordetella avium (strain 197N).